A 247-amino-acid chain; its full sequence is 2,3-bisphosphoglycerate-dependent phosphoglycerate mutase (247 aa).

Substrate-binding positions include Arg-8–Asn-15, Thr-21–Gly-22, Arg-60, Glu-87–Tyr-90, Lys-98, Arg-114–Arg-115, and Gly-183–Asn-184. His-9 (tele-phosphohistidine intermediate) is an active-site residue. Glu-87 (proton donor/acceptor) is an active-site residue.

Belongs to the phosphoglycerate mutase family. BPG-dependent PGAM subfamily. As to quaternary structure, homodimer.

The enzyme catalyses (2R)-2-phosphoglycerate = (2R)-3-phosphoglycerate. Its pathway is carbohydrate degradation; glycolysis; pyruvate from D-glyceraldehyde 3-phosphate: step 3/5. Its function is as follows. Catalyzes the interconversion of 2-phosphoglycerate and 3-phosphoglycerate. In Geobacter sulfurreducens (strain ATCC 51573 / DSM 12127 / PCA), this protein is 2,3-bisphosphoglycerate-dependent phosphoglycerate mutase.